We begin with the raw amino-acid sequence, 355 residues long: tRNA uridine(34) hydroxylase (355 aa).

The 95-residue stretch at Lys-146–Leu-240 folds into the Rhodanese domain. Residue Cys-200 is the Cysteine persulfide intermediate of the active site.

The protein belongs to the TrhO family.

It catalyses the reaction uridine(34) in tRNA + AH2 + O2 = 5-hydroxyuridine(34) in tRNA + A + H2O. Functionally, catalyzes oxygen-dependent 5-hydroxyuridine (ho5U) modification at position 34 in tRNAs. This Hamiltonella defensa subsp. Acyrthosiphon pisum (strain 5AT) protein is tRNA uridine(34) hydroxylase.